Here is a 314-residue protein sequence, read N- to C-terminus: 4-hydroxy-3-methylbut-2-enyl diphosphate reductase (314 aa).

Cysteine 12 contributes to the [4Fe-4S] cluster binding site. (2E)-4-hydroxy-3-methylbut-2-enyl diphosphate is bound by residues histidine 41 and histidine 74. The dimethylallyl diphosphate site is built by histidine 41 and histidine 74. The isopentenyl diphosphate site is built by histidine 41 and histidine 74. Residue cysteine 96 participates in [4Fe-4S] cluster binding. A (2E)-4-hydroxy-3-methylbut-2-enyl diphosphate-binding site is contributed by histidine 124. Residue histidine 124 participates in dimethylallyl diphosphate binding. Histidine 124 is an isopentenyl diphosphate binding site. Residue glutamate 126 is the Proton donor of the active site. Residue threonine 167 coordinates (2E)-4-hydroxy-3-methylbut-2-enyl diphosphate. Cysteine 197 lines the [4Fe-4S] cluster pocket. 4 residues coordinate (2E)-4-hydroxy-3-methylbut-2-enyl diphosphate: serine 225, serine 226, asparagine 227, and serine 269. 4 residues coordinate dimethylallyl diphosphate: serine 225, serine 226, asparagine 227, and serine 269. Isopentenyl diphosphate-binding residues include serine 225, serine 226, asparagine 227, and serine 269.

It belongs to the IspH family. [4Fe-4S] cluster serves as cofactor.

It catalyses the reaction isopentenyl diphosphate + 2 oxidized [2Fe-2S]-[ferredoxin] + H2O = (2E)-4-hydroxy-3-methylbut-2-enyl diphosphate + 2 reduced [2Fe-2S]-[ferredoxin] + 2 H(+). It carries out the reaction dimethylallyl diphosphate + 2 oxidized [2Fe-2S]-[ferredoxin] + H2O = (2E)-4-hydroxy-3-methylbut-2-enyl diphosphate + 2 reduced [2Fe-2S]-[ferredoxin] + 2 H(+). Its pathway is isoprenoid biosynthesis; dimethylallyl diphosphate biosynthesis; dimethylallyl diphosphate from (2E)-4-hydroxy-3-methylbutenyl diphosphate: step 1/1. The protein operates within isoprenoid biosynthesis; isopentenyl diphosphate biosynthesis via DXP pathway; isopentenyl diphosphate from 1-deoxy-D-xylulose 5-phosphate: step 6/6. Catalyzes the conversion of 1-hydroxy-2-methyl-2-(E)-butenyl 4-diphosphate (HMBPP) into a mixture of isopentenyl diphosphate (IPP) and dimethylallyl diphosphate (DMAPP). Acts in the terminal step of the DOXP/MEP pathway for isoprenoid precursor biosynthesis. The polypeptide is 4-hydroxy-3-methylbut-2-enyl diphosphate reductase (Aliivibrio fischeri (strain MJ11) (Vibrio fischeri)).